Reading from the N-terminus, the 429-residue chain is Chordin-like protein 2 (429 aa).

The first 25 residues, 1 to 25, serve as a signal peptide directing secretion; it reads MVPEVRVLSSLLGLALLWFPLDSHA. VWFC domains lie at 31–96 and 109–175; these read MFCL…PKCV and KSCQ…QACK. The N-linked (GlcNAc...) asparagine glycan is linked to N114. Position 182 is a phosphoserine; by FAM20C (S182). The segment at 182–224 is disordered; the sequence is SDEEDSVQSLHGVRHPQDPCSSDAGRKRGPGTPAPTGLSAPLS. In terms of domain architecture, VWFC 3 spans 250–315; it reads KACVHGGKTY…VAGKCCKICP (66 aa).

Interacts with GDF5. May interact with BMP2, BMP4, BMP5, BMP6, BMP7 and INHBA. Phosphorylated by FAM20C in the extracellular medium. Highly expressed in uterus. Moderately expressed in heart, liver, prostate, testis and ovary. Weakly expressed in skeletal muscle, kidney, spleen, small intestine and colon. Expressed in the secretory epithelial cells of uterine endometrium, fallopian tubes, endocervical glands, bladder and prostate, as well as the transitional epithelium of the urinary bladder, and in bone osteoblasts (at protein level). In normal cartilage, expression was confined in a few chondrocytes in the superficial zone as well as in the middle zone. In diseased cartilage coming from osteoarthritic patients, expression was limited to the middle zone of chondrocytes. Isoform 1 and isoform 2 are expressed in fetal cerebellum and heart, while only isoform 2 is detected in fetal spleen. Isoform 2 present in plasma.

Its subcellular location is the secreted. The protein resides in the cytoplasm. In terms of biological role, may inhibit BMPs activity by blocking their interaction with their receptors. Has a negative regulator effect on the cartilage formation/regeneration from immature mesenchymal cells, by preventing or reducing the rate of matrix accumulation. Implicated in tumor angiogenesis. May play a role during myoblast and osteoblast differentiation, and maturation. The polypeptide is Chordin-like protein 2 (CHRDL2) (Homo sapiens (Human)).